Here is a 502-residue protein sequence, read N- to C-terminus: Neuronal acetylcholine receptor subunit alpha-7 (502 aa).

The first 22 residues, 1–22 (MCGRRGGIWLALAAALLHVSLQ), serve as a signal peptide directing secretion. The Extracellular segment spans residues 23–233 (GEFQRRLYKE…VTMRRRTLYY (211 aa)). Ca(2+) is bound by residues R42 and V44. N-linked (GlcNAc...) asparagine glycosylation is found at N46, N90, and N133. C150 and C164 are disulfide-bonded. Residues S172 and Y210 each contribute to the Ca(2+) site. The cysteines at positions 212 and 213 are disulfide-linked. 3 helical membrane-spanning segments follow: residues 234 to 254 (GLNLLIPCVLISALALLVFLL), 262 to 282 (ISLGITVLLSLTVFMLLVAEI), and 295 to 315 (QYFASTMIIVGLSVVVTVIVL). An essential for TMEM35A/NACHO-mediated proper subunit assembly and trafficking to cell membrane region spans residues 260–267 (EKISLGIT). Over 316-469 (RYHHHDPDGG…WKFAACVVDR (154 aa)) the chain is Cytoplasmic. The helical transmembrane segment at 470-490 (LCLMAFSVFTIICTIGILMSA) threads the bilayer.

Belongs to the ligand-gated ion channel (TC 1.A.9) family. Acetylcholine receptor (TC 1.A.9.1) subfamily. Alpha-7/CHRNA7 sub-subfamily. As to quaternary structure, homopentamer. Can also form heteropentamers with CHRNB2, mainly found in basal forebrain cholinergic neurons. Interacts with RIC3; which is required for proper folding and assembly. Interacts with LYPD6. Interacts with CANX. In terms of processing, glycosylations at Asn-46, Asn-90 and Asn-133 are essential for TMEM35A/NACHO-mediated proper subunit assembly and trafficking to the cell membrane. In terms of tissue distribution, higly expressed in brain. ALso expressed in immune cells sucha as macrophages.

Its subcellular location is the postsynaptic cell membrane. It localises to the cell membrane. The enzyme catalyses K(+)(in) = K(+)(out). It carries out the reaction Na(+)(in) = Na(+)(out). It catalyses the reaction Ca(2+)(in) = Ca(2+)(out). The catalysed reaction is choline(out) = choline(in). The enzyme catalyses NH4(+)(in) = NH4(+)(out). It carries out the reaction L-arginine(in) = L-arginine(out). It catalyses the reaction guanidine(out) = guanidine(in). Activated by a myriad of ligands such as acetylcholine, cytisine, nicotine, choline and epibatidine. Oligomeric amyloid-beta protein 42 activates specifially CHRNA7:CHRNB2 nAchRs. Activity is modulated by positive allosteric modulators (PAMs), such as flavonoids, with a wide range of chemical diversity, pharmacological sensitivity and efficacy. AChR activity is inhibited by the antagonists alpha-conotoxons RgIA, ImI and ImII, small disulfide-constrained peptides from cone snails. Component of neuronal acetylcholine receptors (nAChRs) that function as pentameric, ligand-gated cation channels with high calcium permeability among other activities. nAChRs are excitatory neurotrasnmitter receptors formed by a collection of nAChR subunits known to mediate synaptic transmission in the nervous system and the neuromuscular junction. Each nAchR subunit confers differential attributes to channel properties, including activation, deactivation and desensitization kinetics, pH sensitivity, cation permeability, and binding to allosteric modulators. CHRNA7 forms homopentameric neuronal acetylcholine receptors abundantly expressed in the central nervous system, characterized by fast desensitization and high calcium permeability. Also forms heteropentamers with CHRNB2, mainly expressed in basal forebrain cholinergic neurons. Involved in the modulation of calcium-dependent signaling pathways and influences the release of neurotransmitters, including dopamine, glutamate and GABA. Involved in the modulation of calcium-dependent signaling pathways and influences the release of neurotransmitters, including dopamine, glutamate and GABA. Also expressed in non-neuronal cells such as immune cells like lymphocytes, monocytes and macrophages. In T cells, activation induces metabotropic signaling that results in an increase of intracellular Ca2+ concentrations, independent of ionotropic receptor functions. In macrophages, required for acetylcholine-mediated inhibition of TNF and other inflammatory cytokine release. Once activated by acetylcholine, nicotine or other agonists, selectively inhibits production of pro-inflammatory cytokines while leaving anti-inflammatory cytokines undisturbed. Stimulates the cholinergic anti-inflammatory pathway, controlling inflammation by inhibiting NFKB nuclear translocation and activating the JAK2-STAT3 pathway, independently of ion channel activity. Also expressed in the urothelium where it modulates reflex bladder activity by increasing intracellular calcium through internal stores and decreasing basal ATP release. The sequence is that of Neuronal acetylcholine receptor subunit alpha-7 (Chrna7) from Mus musculus (Mouse).